The chain runs to 64 residues: uncharacterized protein (64 aa).

A disordered region spans residues 1 to 64 (MNNPNIVPPH…QNQPPQRPQY (64 aa)). A compositionally biased stretch (low complexity) spans 8–32 (PPHFNQHQQQNHNQNQPPHHMNNPN).

This is an uncharacterized protein from Dictyostelium discoideum (Social amoeba).